Reading from the N-terminus, the 162-residue chain is Small ribosomal subunit protein bS16 (162 aa).

The tract at residues 113-162 (ADGGPTTEATKPKKKSPAKKAAKAAEPAPQPEQPDTPALGGEQAELTAES) is disordered. Over residues 124–134 (PKKKSPAKKAA) the composition is skewed to basic residues.

It belongs to the bacterial ribosomal protein bS16 family.

This Mycobacterium tuberculosis (strain ATCC 25177 / H37Ra) protein is Small ribosomal subunit protein bS16.